A 596-amino-acid polypeptide reads, in one-letter code: Probable ABC transporter ECU01_0200/ECU01_1410 (596 aa).

3 consecutive transmembrane segments (helical) span residues 26 to 46, 173 to 193, and 289 to 309; these read ALMAVVAACIVLGKWFDVMSI, LVPILFTAAAYAAYTCVMLRI, and LSVLFSFVLSIDASMWTLGGI. An ABC transmembrane type-1 domain is found at 39-318; sequence KWFDVMSIKR…IARDLGFWLT (280 aa). Residues 361–593 form the ABC transporter domain; that stretch reads VEFDDVSFAY…RGMYWRMKTA (233 aa). ATP-binding positions include Y370 and 400–411; that span reads GRPGSGKSTILR.

Belongs to the ABC transporter superfamily. ABCB family. Heavy Metal importer (TC 3.A.1.210) subfamily.

The protein resides in the membrane. This is Probable ABC transporter ECU01_0200/ECU01_1410 from Encephalitozoon cuniculi (strain GB-M1) (Microsporidian parasite).